The sequence spans 230 residues: Uracil-DNA glycosylase (230 aa).

Asp65 acts as the Proton acceptor in catalysis.

This sequence belongs to the uracil-DNA glycosylase (UDG) superfamily. UNG family.

Its subcellular location is the cytoplasm. It catalyses the reaction Hydrolyzes single-stranded DNA or mismatched double-stranded DNA and polynucleotides, releasing free uracil.. Excises uracil residues from the DNA which can arise as a result of misincorporation of dUMP residues by DNA polymerase or due to deamination of cytosine. The protein is Uracil-DNA glycosylase of Pediococcus pentosaceus (strain ATCC 25745 / CCUG 21536 / LMG 10740 / 183-1w).